A 240-amino-acid chain; its full sequence is 7-cyano-7-deazaguanine synthase (240 aa).

14-24 (FSGGQDSATCL) lines the ATP pocket. Residues Cys-202, Cys-217, Cys-220, and Cys-223 each contribute to the Zn(2+) site.

Belongs to the QueC family. Zn(2+) is required as a cofactor.

The catalysed reaction is 7-carboxy-7-deazaguanine + NH4(+) + ATP = 7-cyano-7-deazaguanine + ADP + phosphate + H2O + H(+). The protein operates within purine metabolism; 7-cyano-7-deazaguanine biosynthesis. Its function is as follows. Catalyzes the ATP-dependent conversion of 7-carboxy-7-deazaguanine (CDG) to 7-cyano-7-deazaguanine (preQ(0)). This Rhodopseudomonas palustris (strain BisB18) protein is 7-cyano-7-deazaguanine synthase.